Here is a 177-residue protein sequence, read N- to C-terminus: MTKESLEKATFAGGCFWCMVKPFDTQPGIEKVVSGYTGGHTVNPTYKEVCSGTTGHTEAIQITFDPAVFPYEKLVEVYWQQTDPTDAAGQFVDRGDSYRPVIFYHNEEQKEIAEKSKAALDASGRFKKPIVTEIAKAETFYPAEEYHQDFYKKEKAHYEGYQVASGRAAFIDANWKG.

The active site involves Cys15.

It belongs to the MsrA Met sulfoxide reductase family.

It catalyses the reaction L-methionyl-[protein] + [thioredoxin]-disulfide + H2O = L-methionyl-(S)-S-oxide-[protein] + [thioredoxin]-dithiol. The catalysed reaction is [thioredoxin]-disulfide + L-methionine + H2O = L-methionine (S)-S-oxide + [thioredoxin]-dithiol. Its function is as follows. Has an important function as a repair enzyme for proteins that have been inactivated by oxidation. Catalyzes the reversible oxidation-reduction of methionine sulfoxide in proteins to methionine. The polypeptide is Peptide methionine sulfoxide reductase MsrA (Listeria monocytogenes serotype 4a (strain HCC23)).